We begin with the raw amino-acid sequence, 410 residues long: Cell division protein FtsZ (410 aa).

Residues 22–26 (GGGGN), 109–111 (GTG), E140, R144, and D188 each bind GTP. The interval 318–410 (ESKKDRKPHR…STPPFFRRKR (93 aa)) is disordered. Residues 330 to 344 (RQAVQPMQQTTQSVE) are compositionally biased toward polar residues. Residues 360 to 398 (WDIRREQNTRPKVDESSLEQVDKKEFDTFHREEPNHNDD) are compositionally biased toward basic and acidic residues.

Belongs to the FtsZ family. Homodimer. Polymerizes to form a dynamic ring structure in a strictly GTP-dependent manner. Interacts directly with several other division proteins.

It is found in the cytoplasm. Essential cell division protein that forms a contractile ring structure (Z ring) at the future cell division site. The regulation of the ring assembly controls the timing and the location of cell division. One of the functions of the FtsZ ring is to recruit other cell division proteins to the septum to produce a new cell wall between the dividing cells. Binds GTP and shows GTPase activity. The polypeptide is Cell division protein FtsZ (Enterococcus faecalis (strain ATCC 700802 / V583)).